The chain runs to 117 residues: UPF0342 protein OB1136 (117 aa).

This sequence belongs to the UPF0342 family.

The sequence is that of UPF0342 protein OB1136 from Oceanobacillus iheyensis (strain DSM 14371 / CIP 107618 / JCM 11309 / KCTC 3954 / HTE831).